Here is a 210-residue protein sequence, read N- to C-terminus: Mating-type-like protein A1 (210 aa).

The homeobox DNA-binding region spans 141-200 (SKKKRQRLDNSTKEFLEKVFEKNKQPNRRERELIAEKHGVSLSQIRVWFTNKRMRKKEPK).

Belongs to the MATA1 family. As to quaternary structure, forms a heterodimer with ALPHA2.

Its subcellular location is the nucleus. Functionally, mating type proteins are sequence specific DNA-binding proteins that act as master switches in yeast differentiation by controlling gene expression in a cell type-specific fashion. Transcriptional corepressor that acts in conjunction with ALPHA2 to repress transcription both of homozygote-specific genes and of genes necessary for the white-opaque switch, a prerequisite for mating. This is Mating-type-like protein A1 (MTLA1) from Candida albicans (strain SC5314 / ATCC MYA-2876) (Yeast).